The following is a 365-amino-acid chain: MKPLPSTNGKVNGNGKHHDSSLSSTSSTSSSSSSDTQFNISDRYGDFLHRLDTLDTWPKSNEQILLEPYTYLNNIPGKEIRSMMIDAFNHWLQIPRPALEIIKKIVGQLHTASLLMDDVEDDSDLRRGVPVTHKIYGIPQTINTANYVYFLAYQELSKLKPCLSSNASTDLWSLVNDELLQLHRGQGMDLYWRDSLTCPTEEEYLQMVNNKTGGLFRIAIKLMIALSPLTETPDYLPLVNLVGIIFQIRDDLLNLSSVYTKNKGFCEDLTEGKFSFPIVHSIRADSSNHQLMNILRQKPTDIGTKTFAVSYMKDQTKSLQYTREVLTCLEEQAIEEVTRLGGNPALESIFELMHVLPSPPATDQH.

Residues 1–11 (MKPLPSTNGKV) show a composition bias toward polar residues. Residues 1-36 (MKPLPSTNGKVNGNGKHHDSSLSSTSSTSSSSSSDT) form a disordered region. Over residues 21 to 34 (SLSSTSSTSSSSSS) the composition is skewed to low complexity. 3 residues coordinate isopentenyl diphosphate: K78, R81, and H110. The Mg(2+) site is built by D117 and D121. R126 contacts dimethylallyl diphosphate. Residue R127 participates in isopentenyl diphosphate binding. Dimethylallyl diphosphate contacts are provided by K211, T212, and Q247. Position 250 (D250) interacts with Mg(2+). Dimethylallyl diphosphate contacts are provided by N254, K263, and K273.

The protein belongs to the FPP/GGPP synthase family. Mg(2+) serves as cofactor.

It catalyses the reaction isopentenyl diphosphate + dimethylallyl diphosphate = (2E)-geranyl diphosphate + diphosphate. It carries out the reaction isopentenyl diphosphate + (2E)-geranyl diphosphate = (2E,6E)-farnesyl diphosphate + diphosphate. The enzyme catalyses isopentenyl diphosphate + (2E,6E)-farnesyl diphosphate = (2E,6E,10E)-geranylgeranyl diphosphate + diphosphate. Geranylgeranyl pyrophosphate synthase that catalyzes the trans-addition of the three molecules of IPP onto DMAPP to form geranylgeranyl pyrophosphate. Does not show any monoterpene nor sesquiterpene synthase activity. In Melampsora lini (Rust fungus), this protein is Geranylgeranyl pyrophosphate synthase.